The sequence spans 241 residues: Uracil-DNA glycosylase (241 aa).

The Proton acceptor role is filled by Asp-71.

It belongs to the uracil-DNA glycosylase (UDG) superfamily. UNG family.

It is found in the cytoplasm. It catalyses the reaction Hydrolyzes single-stranded DNA or mismatched double-stranded DNA and polynucleotides, releasing free uracil.. Excises uracil residues from the DNA which can arise as a result of misincorporation of dUMP residues by DNA polymerase or due to deamination of cytosine. In Xanthomonas axonopodis pv. citri (strain 306), this protein is Uracil-DNA glycosylase.